A 377-amino-acid chain; its full sequence is Probable trehalose-phosphate phosphatase G (377 aa).

Positions 1-20 are disordered; the sequence is MDLNINKTTPVLSDPTTPVS.

This sequence belongs to the trehalose phosphatase family. Requires a divalent metal cation as cofactor.

The catalysed reaction is alpha,alpha-trehalose 6-phosphate + H2O = alpha,alpha-trehalose + phosphate. It participates in glycan biosynthesis; trehalose biosynthesis. Functionally, removes the phosphate from trehalose 6-phosphate to produce free trehalose. Trehalose accumulation in plant may improve abiotic stress tolerance. The protein is Probable trehalose-phosphate phosphatase G (TPPG) of Arabidopsis thaliana (Mouse-ear cress).